A 103-amino-acid chain; its full sequence is Large ribosomal subunit protein bL21 (103 aa).

Belongs to the bacterial ribosomal protein bL21 family. Part of the 50S ribosomal subunit. Contacts protein L20.

Functionally, this protein binds to 23S rRNA in the presence of protein L20. This chain is Large ribosomal subunit protein bL21, found in Pseudomonas fluorescens (strain Pf0-1).